The chain runs to 1474 residues: Alpha-2-macroglobulin (1474 aa).

The first 23 residues, 1 to 23, serve as a signal peptide directing secretion; that stretch reads MGKNKLLHPSLVLLLLVLLPTDA. Cysteines 48 and 86 form a disulfide. Residues Asn55, Asn70, and Asn247 are each glycosylated (N-linked (GlcNAc...) asparagine). Intrachain disulfides connect Cys251–Cys299 and Cys269–Cys287. Residues Asn396 and Asn410 are each glycosylated (N-linked (GlcNAc...) asparagine). Cystine bridges form between Cys470–Cys563, Cys595–Cys771, Cys642–Cys689, Cys821–Cys849, Cys847–Cys883, Cys921–Cys1321, Cys1079–Cys1127, and Cys1352–Cys1467. A bait region region spans residues 690–728; the sequence is PQLQQYEMHGPEGLRVGFYESDVMGRGHARLVHAEEPPT. Isoglutamyl lysine isopeptide (Gln-Lys) (interchain with K-? in other proteins) cross-links involve residues Gln693 and Gln694. 3 inhibitory regions span residues 704–709, 719–723, and 730–735; these read RVGFYE, RLVHA, and TVRKYF. N-linked (GlcNAc...) asparagine glycosylation occurs at Asn869. A cross-link (isoglutamyl cysteine thioester (Cys-Gln)) is located at residues 972 to 975; it reads CGEQ. Asn991 carries an N-linked (GlcNAc...) asparagine glycan. A glycan (N-linked (GlcNAc...) asparagine) is linked at Asn1424.

The protein belongs to the protease inhibitor I39 (alpha-2-macroglobulin) family. In terms of assembly, homotetramer; disulfide-linked. Plasma.

The protein resides in the secreted. In terms of biological role, is able to inhibit all four classes of proteinases by a unique 'trapping' mechanism. This protein has a peptide stretch, called the 'bait region' which contains specific cleavage sites for different proteinases. When a proteinase cleaves the bait region, a conformational change is induced in the protein which traps the proteinase. The entrapped enzyme remains active against low molecular weight substrates (activity against high molecular weight substrates is greatly reduced). Following cleavage in the bait region a thioester bond is hydrolyzed and mediates the covalent binding of the protein to the proteinase. The protein is Alpha-2-macroglobulin (A2M) of Pongo abelii (Sumatran orangutan).